The chain runs to 454 residues: Tetrahydroanabasine acetyltransferase (454 aa).

Residues histidine 164 and aspartate 389 each act as proton acceptor in the active site.

The protein belongs to the plant acyltransferase family. As to quaternary structure, monomer.

It catalyses the reaction tetrahydroanabasine + acetyl-CoA = ammodendrine + CoA. Its pathway is alkaloid biosynthesis. In terms of biological role, tetrahydroanabasine acetyltransferase involved in the accumulation of quinolizidine type antinutritional alkaloids (QAs) natural products. QAs impart a bitter taste to plants, acting as repellents and toxicants for herbivores and predators, and possess a variety of pharmacological effects, including sedative, anticonvulsant, anti-inflammatory, antiviral, antitumor, antipyretic, anti-hepatitis B, antifibrotic, antiallergic, antidiarrheal, analgesic and antimicrobial activities. Mediates the conversion of tetrahydroanabasine into ammodendrine. The sequence is that of Tetrahydroanabasine acetyltransferase from Lupinus albus (White lupine).